We begin with the raw amino-acid sequence, 337 residues long: Protein-arginine kinase (337 aa).

A Phosphagen kinase C-terminal domain is found at 12–240; that stretch reads IVIASKVKIL…NKLILREKNQ (229 aa). Residues 15–19, 162–166, and 193–198 contribute to the ATP site; these read ASKVK, RTKVF, and KSIYNS.

Belongs to the ATP:guanido phosphotransferase family.

It carries out the reaction L-arginyl-[protein] + ATP = N(omega)-phospho-L-arginyl-[protein] + ADP + H(+). Functionally, catalyzes the specific phosphorylation of arginine residues in proteins. In Clostridium perfringens (strain 13 / Type A), this protein is Protein-arginine kinase.